The sequence spans 377 residues: Guanine nucleotide-binding protein subunit beta-2 (377 aa).

7 WD repeats span residues 63 to 93 (GHTG…IVWN), 105 to 135 (LPCA…SIFN), 154 to 185 (GHKG…VLWD), 202 to 233 (GHTA…RLWD), 246 to 276 (GHEG…RLFD), 293 to 323 (GDIP…YVWD), and 339 to 369 (SHEG…KIWA).

This sequence belongs to the WD repeat G protein beta family. In terms of assembly, g proteins are composed of 3 units, alpha, beta and gamma.

Its function is as follows. Guanine nucleotide-binding proteins (G proteins) are involved as a modulator or transducer in various transmembrane signaling systems. The beta and gamma chains are required for the GTPase activity, for replacement of GDP by GTP, and for G protein-effector interaction. This chain is Guanine nucleotide-binding protein subunit beta-2, found in Nicotiana tabacum (Common tobacco).